Here is a 392-residue protein sequence, read N- to C-terminus: Cell division protein DivIB (392 aa).

Residues methionine 1–asparagine 88 form a disordered region. The Cytoplasmic segment spans residues methionine 1–methionine 131. Residues lysine 14 to alanine 32 are compositionally biased toward basic and acidic residues. Positions threonine 58–asparagine 76 are enriched in acidic residues. The chain crosses the membrane as a helical span at residues tryptophan 132 to leucine 152. One can recognise a POTRA domain in the interval serine 153–histidine 224. Residues serine 153–asparagine 392 lie on the Extracellular side of the membrane. Residues isoleucine 368 to asparagine 392 are disordered.

This sequence belongs to the FtsQ/DivIB family. DivIB subfamily.

The protein resides in the cell membrane. In terms of biological role, cell division protein that may be involved in stabilizing or promoting the assembly of the division complex. This chain is Cell division protein DivIB, found in Lactococcus lactis subsp. lactis (strain KF147).